The following is a 336-amino-acid chain: Cytosolic Fe-S cluster assembly factor NBP35 (336 aa).

The tract at residues 1-20 (MIATQRPFPIPSPVPLAPSS) is disordered. 4 residues coordinate [4Fe-4S] cluster: C35, C49, C52, and C58. 88 to 95 (GKGGVGKS) contacts ATP. Residues C261 and C264 each contribute to the [4Fe-4S] cluster site.

It belongs to the Mrp/NBP35 ATP-binding proteins family. NUBP1/NBP35 subfamily. As to quaternary structure, heterotetramer of 2 NBP35 and 2 CFD1 chains. [4Fe-4S] cluster serves as cofactor.

The protein localises to the cytoplasm. Functionally, component of the cytosolic iron-sulfur (Fe/S) protein assembly (CIA) machinery. Required for maturation of extramitochondrial Fe-S proteins. The NBP35-CFD1 heterotetramer forms a Fe-S scaffold complex, mediating the de novo assembly of an Fe-S cluster and its transfer to target apoproteins. In Cryptococcus neoformans var. neoformans serotype D (strain B-3501A) (Filobasidiella neoformans), this protein is Cytosolic Fe-S cluster assembly factor NBP35.